A 386-amino-acid chain; its full sequence is Succinate--CoA ligase [ADP-forming] subunit beta (386 aa).

The ATP-grasp domain occupies 9–244 (KELLRDYGVP…LNEEDEKEIE (236 aa)). ATP is bound by residues K46, 53 to 55 (GRG), E99, C102, and E107. Mg(2+) is bound by residues N199 and D213. Substrate-binding positions include N264 and 321–323 (GIM).

This sequence belongs to the succinate/malate CoA ligase beta subunit family. As to quaternary structure, heterotetramer of two alpha and two beta subunits. Mg(2+) is required as a cofactor.

The enzyme catalyses succinate + ATP + CoA = succinyl-CoA + ADP + phosphate. It catalyses the reaction GTP + succinate + CoA = succinyl-CoA + GDP + phosphate. It participates in carbohydrate metabolism; tricarboxylic acid cycle; succinate from succinyl-CoA (ligase route): step 1/1. Succinyl-CoA synthetase functions in the citric acid cycle (TCA), coupling the hydrolysis of succinyl-CoA to the synthesis of either ATP or GTP and thus represents the only step of substrate-level phosphorylation in the TCA. The beta subunit provides nucleotide specificity of the enzyme and binds the substrate succinate, while the binding sites for coenzyme A and phosphate are found in the alpha subunit. The chain is Succinate--CoA ligase [ADP-forming] subunit beta from Alkaliphilus oremlandii (strain OhILAs) (Clostridium oremlandii (strain OhILAs)).